We begin with the raw amino-acid sequence, 415 residues long: MRPAQDNQGSFLGRISIRRNQFVDVNNEQEQEDLELFQKHIADRFTELLSPPQPPPSDEINTVASVAATEQIMSVTWLRKLMDVFLCCEAEFKAILLMGRDPTQISKPPFDRLVPEMLDRSIKALDICTAVVNGIDSVRHYQRLAEIAVTALEQRPLGDGNVRRAKRALANLVVALSLEDKENVSGGGGGGGGGNKTTERSWSFGRRSGGSSAASKGGATIGQLKSSSWAVGRNWSAAKQIHAMTANLTPPRGNEAAGLPQPMFIMSTVMVFVMWVLTAAVPCQERSGLANHLPVPPKHLNWAQSLIGIHEKIGDEWKKKEKKGSAGLMEEMTRMEKLGHSLMEFADGFHYPAEKDAAESAAVQVAEMAEICRRMEEELVPLQQQIREVFHRIVRSRAEILEVLEQAGKVSAPVV.

Residues 184 to 219 (VSGGGGGGGGGNKTTERSWSFGRRSGGSSAASKGGA) form a disordered region. Residues 185–195 (SGGGGGGGGGN) are compositionally biased toward gly residues. Low complexity predominate over residues 200–219 (RSWSFGRRSGGSSAASKGGA). Residues 263–283 (MFIMSTVMVFVMWVLTAAVPC) traverse the membrane as a helical segment.

Belongs to the ROH1 family. Interacts with EXO70A1 and EXO70C1. Binds to EXO70C2. As to expression, mainly expressed in cells expanding in a polar manner such as pollen and root hairs.

It localises to the membrane. The protein localises to the cytoplasm. It is found in the cytosol. Its function is as follows. Required for seed coat mucilage deposition. In Arabidopsis thaliana (Mouse-ear cress), this protein is Protein ROH1A.